A 479-amino-acid chain; its full sequence is Acetylcholine receptor subunit alpha-type acr-15 (479 aa).

A signal peptide spans 1–18; it reads MLLPILLHFLLLITQLNG. The Extracellular portion of the chain corresponds to 19-230; it reads SPAEVRLIND…HLRRRTLYYS (212 aa). 2 N-linked (GlcNAc...) asparagine glycosylation sites follow: Asn60 and Asn92. An intrachain disulfide couples Cys146 to Cys160. Asn200 is a glycosylation site (N-linked (GlcNAc...) asparagine). A disulfide bond links Cys208 and Cys209. The chain crosses the membrane as a helical span at residues 231–251; that stretch reads FNLIAPVLLTMILVILGFTVS. The Cytoplasmic portion of the chain corresponds to 252-257; that stretch reads PETCEK. The helical transmembrane segment at 258-278 threads the bilayer; the sequence is VGLQISVSLAICIFLTIMSEL. Topologically, residues 279 to 285 are extracellular; it reads TPQTSEA. The helical transmembrane segment at 286 to 306 threads the bilayer; the sequence is VPLLGVFFHTCNFISVLATSF. Topologically, residues 307–453 are cytoplasmic; it reads TVYVQSFHFR…WRFAAIVVDR (147 aa). A helical membrane pass occupies residues 454-474; that stretch reads LCLLAFSLLIVVVSIIIALRA. At 475-479 the chain is on the extracellular side; it reads PYLFA.

The protein belongs to the ligand-gated ion channel (TC 1.A.9) family. Acetylcholine receptor (TC 1.A.9.1) subfamily. As to expression, expressed in interneurons, motor neurons, pharyngeal neurons and muscles.

The protein localises to the cell membrane. It is found in the postsynaptic cell membrane. Functionally, after binding acetylcholine, the AChR responds by an extensive change in conformation that affects all subunits and leads to opening of an ion-conducting channel across the plasma membrane. Activity is required in glutamatergic neurons to mediate nicotine-induced and nicotine-motivated behaviors. This is Acetylcholine receptor subunit alpha-type acr-15 from Caenorhabditis elegans.